Reading from the N-terminus, the 133-residue chain is ATP synthase epsilon chain, chloroplastic (133 aa).

Belongs to the ATPase epsilon chain family. F-type ATPases have 2 components, CF(1) - the catalytic core - and CF(0) - the membrane proton channel. CF(1) has five subunits: alpha(3), beta(3), gamma(1), delta(1), epsilon(1). CF(0) has three main subunits: a, b and c.

It is found in the plastid. Its subcellular location is the chloroplast thylakoid membrane. Produces ATP from ADP in the presence of a proton gradient across the membrane. This Morus indica (Mulberry) protein is ATP synthase epsilon chain, chloroplastic.